A 239-amino-acid chain; its full sequence is Ribose-5-phosphate isomerase A (239 aa).

Residues 40-43, 96-99, and 110-113 each bind substrate; these read SGST, DGAD, and KGGG. The active-site Proton acceptor is the Glu119. Residue Lys137 coordinates substrate.

This sequence belongs to the ribose 5-phosphate isomerase family. Homodimer.

It catalyses the reaction aldehydo-D-ribose 5-phosphate = D-ribulose 5-phosphate. The protein operates within carbohydrate degradation; pentose phosphate pathway; D-ribose 5-phosphate from D-ribulose 5-phosphate (non-oxidative stage): step 1/1. In terms of biological role, catalyzes the reversible conversion of ribose-5-phosphate to ribulose 5-phosphate. The sequence is that of Ribose-5-phosphate isomerase A from Methanococcus maripaludis (strain C5 / ATCC BAA-1333).